We begin with the raw amino-acid sequence, 156 residues long: Organelle RRM domain-containing protein 2, mitochondrial (156 aa).

The transit peptide at M1 to F28 directs the protein to the mitochondrion. The RRM domain occupies T56–P134. S64 is modified (phosphoserine). The span at Q137 to S148 shows a compositional bias: polar residues. A disordered region spans residues Q137–R156.

In terms of assembly, interacts with RBG3/ORRM3. Binds to RBG2/ORRM5.

It is found in the mitochondrion. Involved in C-to-U editing of mitochondrial RNA. Functions as minor mitochondrial editing factor. Controls 6 percent of the mitochondrial editing sites. The protein is Organelle RRM domain-containing protein 2, mitochondrial of Arabidopsis thaliana (Mouse-ear cress).